A 274-amino-acid polypeptide reads, in one-letter code: 2,3,4,5-tetrahydropyridine-2,6-dicarboxylate N-succinyltransferase (274 aa).

Arg104 and Asp141 together coordinate substrate.

Belongs to the transferase hexapeptide repeat family. As to quaternary structure, homotrimer.

It localises to the cytoplasm. The enzyme catalyses (S)-2,3,4,5-tetrahydrodipicolinate + succinyl-CoA + H2O = (S)-2-succinylamino-6-oxoheptanedioate + CoA. Its pathway is amino-acid biosynthesis; L-lysine biosynthesis via DAP pathway; LL-2,6-diaminopimelate from (S)-tetrahydrodipicolinate (succinylase route): step 1/3. The protein is 2,3,4,5-tetrahydropyridine-2,6-dicarboxylate N-succinyltransferase of Shigella dysenteriae serotype 1 (strain Sd197).